Reading from the N-terminus, the 861-residue chain is Probable linoleate 9S-lipoxygenase 8 (861 aa).

Residues 33-160 (FTDLASSLTG…NYKSDRIFFA (128 aa)) form the PLAT domain. The Lipoxygenase domain maps to 163–861 (PYLPSETPEL…GKGIPNSVSI (699 aa)). Residues 220 to 245 (TLGGSAEYPYPRRGRTGRPPTRTDPK) form a disordered region. Fe cation is bound by residues H522, H527, H713, N717, and I861.

The protein belongs to the lipoxygenase family. In terms of assembly, monomer. The cofactor is Fe cation.

The protein localises to the cytoplasm. It carries out the reaction (9Z,12Z)-octadecadienoate + O2 = (9S)-hydroperoxy-(10E,12Z)-octadecadienoate. It functions in the pathway lipid metabolism; oxylipin biosynthesis. Its function is as follows. Plant lipoxygenases may be involved in a number of diverse aspects of plant physiology including growth and development, pest resistance, and senescence or responses to wounding. Catalyzes the hydroperoxidation of lipids containing a cis,cis-1,4-pentadiene structure. This Solanum tuberosum (Potato) protein is Probable linoleate 9S-lipoxygenase 8 (LOX1.8).